Here is a 108-residue protein sequence, read N- to C-terminus: Pyrimidine/purine nucleoside phosphorylase (108 aa).

This sequence belongs to the nucleoside phosphorylase PpnP family.

The catalysed reaction is a purine D-ribonucleoside + phosphate = a purine nucleobase + alpha-D-ribose 1-phosphate. It carries out the reaction adenosine + phosphate = alpha-D-ribose 1-phosphate + adenine. It catalyses the reaction cytidine + phosphate = cytosine + alpha-D-ribose 1-phosphate. The enzyme catalyses guanosine + phosphate = alpha-D-ribose 1-phosphate + guanine. The catalysed reaction is inosine + phosphate = alpha-D-ribose 1-phosphate + hypoxanthine. It carries out the reaction thymidine + phosphate = 2-deoxy-alpha-D-ribose 1-phosphate + thymine. It catalyses the reaction uridine + phosphate = alpha-D-ribose 1-phosphate + uracil. The enzyme catalyses xanthosine + phosphate = alpha-D-ribose 1-phosphate + xanthine. Catalyzes the phosphorolysis of diverse nucleosides, yielding D-ribose 1-phosphate and the respective free bases. Can use uridine, adenosine, guanosine, cytidine, thymidine, inosine and xanthosine as substrates. Also catalyzes the reverse reactions. In Acinetobacter baumannii (strain AB307-0294), this protein is Pyrimidine/purine nucleoside phosphorylase.